Reading from the N-terminus, the 291-residue chain is Acetyl-coenzyme A carboxylase carboxyl transferase subunit beta (291 aa).

The region spanning 34-291 (MWTKCSNCNN…LILHGVNKYE (258 aa)) is the CoA carboxyltransferase N-terminal domain. 4 residues coordinate Zn(2+): Cys38, Cys41, Cys57, and Cys60. A C4-type zinc finger spans residues 38–60 (CSNCNNMIYYEDLENNKYVCTKC).

This sequence belongs to the AccD/PCCB family. In terms of assembly, acetyl-CoA carboxylase is a heterohexamer composed of biotin carboxyl carrier protein (AccB), biotin carboxylase (AccC) and two subunits each of ACCase subunit alpha (AccA) and ACCase subunit beta (AccD). Zn(2+) is required as a cofactor.

The protein localises to the cytoplasm. The enzyme catalyses N(6)-carboxybiotinyl-L-lysyl-[protein] + acetyl-CoA = N(6)-biotinyl-L-lysyl-[protein] + malonyl-CoA. Its pathway is lipid metabolism; malonyl-CoA biosynthesis; malonyl-CoA from acetyl-CoA: step 1/1. Functionally, component of the acetyl coenzyme A carboxylase (ACC) complex. Biotin carboxylase (BC) catalyzes the carboxylation of biotin on its carrier protein (BCCP) and then the CO(2) group is transferred by the transcarboxylase to acetyl-CoA to form malonyl-CoA. The protein is Acetyl-coenzyme A carboxylase carboxyl transferase subunit beta of Clostridium botulinum (strain Eklund 17B / Type B).